The primary structure comprises 338 residues: UDP-3-O-acylglucosamine N-acyltransferase (338 aa).

Histidine 251 serves as the catalytic Proton acceptor.

This sequence belongs to the transferase hexapeptide repeat family. LpxD subfamily. In terms of assembly, homotrimer.

It catalyses the reaction a UDP-3-O-[(3R)-3-hydroxyacyl]-alpha-D-glucosamine + a (3R)-hydroxyacyl-[ACP] = a UDP-2-N,3-O-bis[(3R)-3-hydroxyacyl]-alpha-D-glucosamine + holo-[ACP] + H(+). The protein operates within bacterial outer membrane biogenesis; LPS lipid A biosynthesis. Catalyzes the N-acylation of UDP-3-O-acylglucosamine using 3-hydroxyacyl-ACP as the acyl donor. Is involved in the biosynthesis of lipid A, a phosphorylated glycolipid that anchors the lipopolysaccharide to the outer membrane of the cell. This Psychrobacter arcticus (strain DSM 17307 / VKM B-2377 / 273-4) protein is UDP-3-O-acylglucosamine N-acyltransferase.